The chain runs to 66 residues: Large ribosomal subunit protein bL32 (66 aa).

This sequence belongs to the bacterial ribosomal protein bL32 family.

The polypeptide is Large ribosomal subunit protein bL32 (Leptospira interrogans serogroup Icterohaemorrhagiae serovar copenhageni (strain Fiocruz L1-130)).